Here is a 951-residue protein sequence, read N- to C-terminus: MASKKMTKSYFDVLGICCTSEVPLIENILNSMDGVKEFSVIVPSRTVIVVHDTLILSQFQIVKALNQAQLEANVRVTGETNFKNKWPSPFAVVSGILLLLSFFKYLYSPFRWLAVAAVVAGIYPILAKAVASLARFRIDINILVVVTVGATIGMQDYTEAAVVVFLFTIAEWLQSRASYKASAVMQSLMSLAPQKAVIAETGEEVEVDELKTNTVIAVKAGETIPIDGVVVDGNCEVDEKTLTGEAFPVPKLKDSTVWAGTINLNGYITVNTTALAEDCVVAKMAKLVEEAQNSKTETQRFIDKCSKYYTPAIILISICFVAIPFALKVHNLKHWVHLALVVLVSACPCGLILSTPVATFCALTKAATSGLLIKGADYLETLAKIKIVAFDKTGTITRGEFIVMDFQSLSEDISLQSLLYWVSSTESKSSHPMAAAVVDYARSVSVEPKPEAVEDYQNFPGEGIYGKIDGKEVYIGNKRIASRAGCLSVPDIDVDTKGGKTIGYVYVGETLAGVFNLSDACRSGVAQAMKELKSLGIKIAMLTGDNHAAAMHAQEQLGNAMDIVRAELLPEDKSEIIKQLKREEGPTAMVGDGLNDAPALATADIGISMGVSGSALATETGNIILMSNDIRRIPQAIKLAKRAKRKVVENVVISITMKGAILALAFAGHPLIWAAVLADVGTCLLVILNSMLLLSDKHKTGNKCYRESSSSSVLIAEKLEGDAAGDMEAGLLPKISDKHCKPGCCGTKTQEKAMKPAKASSDHSHSGCCETKQKDNVTVVKKSCCAEPVDLGHGHDSGCCGDKSQQPHQHEVQVQQSCHNKPSGLDSGCCGGKSQQPHQHELQQSCHDKPSGLDIGTGPKHEGSSTLVNLEGDAKEELKVLVNGFCSSPADLAITSLKVKSDSHCKSNCSSRERCHHGSNCCRSYAKESCSHDHHHTRAHGVGTLKEIVIE.

Over 1 to 83 (MASKKMTKSY…VRVTGETNFK (83 aa)) the chain is Cytoplasmic. The HMA domain maps to 7 to 73 (TKSYFDVLGI…ALNQAQLEAN (67 aa)). The helical transmembrane segment at 84–105 (NKWPSPFAVVSGILLLLSFFKY) threads the bilayer. Topologically, residues 106–108 (LYS) are extracellular. A helical transmembrane segment spans residues 109–128 (PFRWLAVAAVVAGIYPILAK). The Cytoplasmic portion of the chain corresponds to 129 to 135 (AVASLAR). Residues 136–156 (FRIDINILVVVTVGATIGMQD) form a helical membrane-spanning segment. Y157 is a topological domain (extracellular). The chain crosses the membrane as a helical span at residues 158-178 (TEAAVVVFLFTIAEWLQSRAS). The Cytoplasmic segment spans residues 179–304 (YKASAVMQSL…KTETQRFIDK (126 aa)). A helical membrane pass occupies residues 305–327 (CSKYYTPAIILISICFVAIPFAL). Residues 328 to 335 (KVHNLKHW) lie on the Extracellular side of the membrane. The helical transmembrane segment at 336–353 (VHLALVVLVSACPCGLIL) threads the bilayer. Over 354 to 647 (STPVATFCAL…KLAKRAKRKV (294 aa)) the chain is Cytoplasmic. D391 (4-aspartylphosphate intermediate) is an active-site residue. Residues D592 and D596 each coordinate Mg(2+). Residues 648–667 (VENVVISITMKGAILALAFA) form a helical membrane-spanning segment. Residues 668-671 (GHPL) lie on the Extracellular side of the membrane. The helical transmembrane segment at 672–691 (IWAAVLADVGTCLLVILNSM) threads the bilayer. Topologically, residues 692–951 (LLLSDKHKTG…VGTLKEIVIE (260 aa)) are cytoplasmic. Over residues 841-851 (ELQQSCHDKPS) the composition is skewed to basic and acidic residues. Positions 841-866 (ELQQSCHDKPSGLDIGTGPKHEGSST) are disordered.

Belongs to the cation transport ATPase (P-type) (TC 3.A.3) family. Type IB subfamily. As to expression, predominantly expressed in the vascular tissues of roots, stems, and leaves. Also detected in developing anthers.

The protein localises to the cell membrane. It carries out the reaction Zn(2+)(in) + ATP + H2O = Zn(2+)(out) + ADP + phosphate + H(+). The catalysed reaction is Cd(2+)(in) + ATP + H2O = Cd(2+)(out) + ADP + phosphate + H(+). In terms of biological role, plays an important role in zinc transport and homeostasis. Could also be involved in cadmium detoxification. The sequence is that of Cadmium/zinc-transporting ATPase HMA2 (HMA2) from Arabidopsis thaliana (Mouse-ear cress).